The chain runs to 222 residues: tRNA (guanine-N(1)-)-methyltransferase (222 aa).

S-adenosyl-L-methionine contacts are provided by residues Gly-112 and 132–137 (IGDYVL).

The protein belongs to the RNA methyltransferase TrmD family. In terms of assembly, homodimer.

The protein resides in the cytoplasm. It catalyses the reaction guanosine(37) in tRNA + S-adenosyl-L-methionine = N(1)-methylguanosine(37) in tRNA + S-adenosyl-L-homocysteine + H(+). In terms of biological role, specifically methylates guanosine-37 in various tRNAs. This is tRNA (guanine-N(1)-)-methyltransferase from Azobacteroides pseudotrichonymphae genomovar. CFP2.